The following is a 110-amino-acid chain: NADH-quinone oxidoreductase subunit K (110 aa).

Transmembrane regions (helical) follow at residues 13–33 (VTHG…GIII), 38–58 (ILIL…NFLI), and 70–90 (VFVF…LAIV).

This sequence belongs to the complex I subunit 4L family. In terms of assembly, NDH-1 is composed of 14 different subunits. Subunits NuoA, H, J, K, L, M, N constitute the membrane sector of the complex.

The protein resides in the cell inner membrane. The catalysed reaction is a quinone + NADH + 5 H(+)(in) = a quinol + NAD(+) + 4 H(+)(out). Functionally, NDH-1 shuttles electrons from NADH, via FMN and iron-sulfur (Fe-S) centers, to quinones in the respiratory chain. The immediate electron acceptor for the enzyme in this species is believed to be ubiquinone. Couples the redox reaction to proton translocation (for every two electrons transferred, four hydrogen ions are translocated across the cytoplasmic membrane), and thus conserves the redox energy in a proton gradient. The chain is NADH-quinone oxidoreductase subunit K from Francisella tularensis subsp. tularensis (strain FSC 198).